We begin with the raw amino-acid sequence, 537 residues long: 2-isopropylmalate synthase (537 aa).

The region spanning 8–273 (IIIFDTTLRD…FLGRPVDSME (266 aa)) is the Pyruvate carboxyltransferase domain. Aspartate 17, histidine 208, histidine 210, and asparagine 244 together coordinate Mn(2+). Positions 408-537 (RLELVQVSCG…PSEPVLTSKN (130 aa)) are regulatory domain.

The protein belongs to the alpha-IPM synthase/homocitrate synthase family. LeuA type 1 subfamily. As to quaternary structure, homodimer. The cofactor is Mn(2+).

It localises to the cytoplasm. It carries out the reaction 3-methyl-2-oxobutanoate + acetyl-CoA + H2O = (2S)-2-isopropylmalate + CoA + H(+). It participates in amino-acid biosynthesis; L-leucine biosynthesis; L-leucine from 3-methyl-2-oxobutanoate: step 1/4. Catalyzes the condensation of the acetyl group of acetyl-CoA with 3-methyl-2-oxobutanoate (2-ketoisovalerate) to form 3-carboxy-3-hydroxy-4-methylpentanoate (2-isopropylmalate). This chain is 2-isopropylmalate synthase, found in Crocosphaera subtropica (strain ATCC 51142 / BH68) (Cyanothece sp. (strain ATCC 51142)).